Reading from the N-terminus, the 239-residue chain is Protein GrpE (239 aa).

Disordered regions lie at residues 1-50 (MIEN…INTE) and 209-239 (MGHGQQNSQEEVEKDTVEEDIDSEENTSEDV). A compositionally biased stretch (polar residues) spans 16-30 (VLNQDNAPEDNSSAA). A compositionally biased stretch (acidic residues) spans 218 to 239 (EEVEKDTVEEDIDSEENTSEDV).

The protein belongs to the GrpE family. In terms of assembly, homodimer.

It localises to the cytoplasm. Its function is as follows. Participates actively in the response to hyperosmotic and heat shock by preventing the aggregation of stress-denatured proteins, in association with DnaK and GrpE. It is the nucleotide exchange factor for DnaK and may function as a thermosensor. Unfolded proteins bind initially to DnaJ; upon interaction with the DnaJ-bound protein, DnaK hydrolyzes its bound ATP, resulting in the formation of a stable complex. GrpE releases ADP from DnaK; ATP binding to DnaK triggers the release of the substrate protein, thus completing the reaction cycle. Several rounds of ATP-dependent interactions between DnaJ, DnaK and GrpE are required for fully efficient folding. This chain is Protein GrpE, found in Prochlorococcus marinus (strain MIT 9312).